Consider the following 255-residue polypeptide: NAD kinase (255 aa).

Residue aspartate 44 is the Proton acceptor of the active site. Residues 44-45 (DG), histidine 49, 114-115 (NE), aspartate 144, alanine 152, 155-160 (SAYNLS), and glutamine 216 each bind NAD(+).

Belongs to the NAD kinase family. It depends on a divalent metal cation as a cofactor.

The protein localises to the cytoplasm. The catalysed reaction is NAD(+) + ATP = ADP + NADP(+) + H(+). Its function is as follows. Involved in the regulation of the intracellular balance of NAD and NADP, and is a key enzyme in the biosynthesis of NADP. Catalyzes specifically the phosphorylation on 2'-hydroxyl of the adenosine moiety of NAD to yield NADP. This is NAD kinase from Rickettsia africae (strain ESF-5).